Consider the following 352-residue polypeptide: Putative pectinesterase 11 (352 aa).

The chain crosses the membrane as a helical span at residues 13–35 (ANYHHIIIINIFILSSITSSSMA). Residue Asn76 is glycosylated (N-linked (GlcNAc...) asparagine). The active-site Proton donor is the Asp175. Asp196 acts as the Nucleophile in catalysis. Residue Asn218 is glycosylated (N-linked (GlcNAc...) asparagine). Residues Arg252 and Trp254 each coordinate substrate. A disordered region spans residues 332–352 (LRPAPSHFKNAPKQTQNKEIN). The span at 343 to 352 (PKQTQNKEIN) shows a compositional bias: polar residues.

Belongs to the pectinesterase family.

The protein localises to the membrane. It carries out the reaction [(1-&gt;4)-alpha-D-galacturonosyl methyl ester](n) + n H2O = [(1-&gt;4)-alpha-D-galacturonosyl](n) + n methanol + n H(+). It functions in the pathway glycan metabolism; pectin degradation; 2-dehydro-3-deoxy-D-gluconate from pectin: step 1/5. Its function is as follows. Acts in the modification of cell walls via demethylesterification of cell wall pectin. The sequence is that of Putative pectinesterase 11 (PME11) from Arabidopsis thaliana (Mouse-ear cress).